We begin with the raw amino-acid sequence, 268 residues long: Small ribosomal subunit protein uS3 (268 aa).

Residues 39–107 (VREYLKKKLK…PVHVNIEEIR (69 aa)) enclose the KH type-2 domain. The tract at residues 216-268 (VEEVAEEKRPRRNARPGGDRRPRRDGEGGGPAGARRGAPRRAGGAGGDGKTGE) is disordered. Over residues 232–242 (GGDRRPRRDGE) the composition is skewed to basic and acidic residues. A compositionally biased stretch (low complexity) spans 248-257 (GARRGAPRRA). Over residues 258 to 268 (GGAGGDGKTGE) the composition is skewed to gly residues.

This sequence belongs to the universal ribosomal protein uS3 family. Part of the 30S ribosomal subunit. Forms a tight complex with proteins S10 and S14.

Functionally, binds the lower part of the 30S subunit head. Binds mRNA in the 70S ribosome, positioning it for translation. This chain is Small ribosomal subunit protein uS3, found in Paraburkholderia phytofirmans (strain DSM 17436 / LMG 22146 / PsJN) (Burkholderia phytofirmans).